The primary structure comprises 339 residues: Carboxyvinyl-carboxyphosphonate phosphorylmutase, chloroplastic (339 aa).

The N-terminal 30 residues, 1 to 30 (MSMLMAVKTTSLCCSSLNLTASPTFRRNPR), are a transit peptide targeting the chloroplast.

This sequence belongs to the isocitrate lyase/PEP mutase superfamily.

It is found in the plastid. It localises to the chloroplast. It carries out the reaction 1-carboxyvinyl carboxyphosphonate + H(+) = 3-(hydrohydroxyphosphoryl)pyruvate + CO2. The polypeptide is Carboxyvinyl-carboxyphosphonate phosphorylmutase, chloroplastic (Arabidopsis thaliana (Mouse-ear cress)).